Consider the following 473-residue polypeptide: MKTLYSLRRFYPVETLFNGTLALAGRDQETTGFAWWAGNARLINLSGKLLGAHVAHAGLIVFWAGAMNLFEVAHFVPEKPMYEQGLILLPHLATLGWGVGPGGEVIDTFPYFVSGVLHLISSAVLGFGGIYHALLGPETLEESFPFFGYVWKDRNKMTTILGIHLILLGIGAFLLVFKALYFGGVYDTWAPGGGDVRKITNLTLSPSVIFGYLLKSPFGGEGWIVSVDDLEDIIGGHVWLGSICIFGGIWHILTKPFAWARRALVWSGEAYLSYSLGALAVFGFIACCFVWFNNTAYPSEFYGPTGPEASQAQAFTFLVRDQRLGANVGSAQGPTGLGKYLMRSPTGEVIFGGETMRFWDLRAPWLEPLRGPNGLDLSRLKKDIQPWQERRSAEYMTHAPLGSLNSVGGVATEINAVNYVSPRSWLATSHFVLGFFLFVGHLWHAGRARAAAAGFEKGIDRDFEPVLSMTPLN.

Positions 1-14 are excised as a propeptide; the sequence is MKTLYSLRRFYPVE. At threonine 15 the chain carries N-acetylthreonine. At threonine 15 the chain carries Phosphothreonine. The next 5 membrane-spanning stretches (helical) occupy residues 69-93, 134-155, 178-200, 255-275, and 291-312; these read LFEVAHFVPEKPMYEQGLILLPHLA, LLGPETLEESFPFFGYVWKDRN, KALYFGGVYDTWAPGGGDVRKIT, KPFAWARRALVWSGEAYLSYS, and WFNNTAYPSEFYGPTGPEASQA. Glutamate 367 is a binding site for [CaMn4O5] cluster. Residues 447 to 471 traverse the membrane as a helical segment; sequence RARAAAAGFEKGIDRDFEPVLSMTP.

It belongs to the PsbB/PsbC family. PsbC subfamily. As to quaternary structure, PSII is composed of 1 copy each of membrane proteins PsbA, PsbB, PsbC, PsbD, PsbE, PsbF, PsbH, PsbI, PsbJ, PsbK, PsbL, PsbM, PsbT, PsbX, PsbY, PsbZ, Psb30/Ycf12, at least 3 peripheral proteins of the oxygen-evolving complex and a large number of cofactors. It forms dimeric complexes. Binds multiple chlorophylls and provides some of the ligands for the Ca-4Mn-5O cluster of the oxygen-evolving complex. It may also provide a ligand for a Cl- that is required for oxygen evolution. PSII binds additional chlorophylls, carotenoids and specific lipids. is required as a cofactor.

Its subcellular location is the plastid. The protein localises to the chloroplast thylakoid membrane. Its function is as follows. One of the components of the core complex of photosystem II (PSII). It binds chlorophyll and helps catalyze the primary light-induced photochemical processes of PSII. PSII is a light-driven water:plastoquinone oxidoreductase, using light energy to abstract electrons from H(2)O, generating O(2) and a proton gradient subsequently used for ATP formation. This Vitis vinifera (Grape) protein is Photosystem II CP43 reaction center protein.